The following is a 210-amino-acid chain: Oxygen-insensitive NADPH nitroreductase (210 aa).

150-155 contributes to the NADP(+) binding site; that stretch reads GVSLMG.

The protein belongs to the nitroreductase family.

In terms of biological role, reduction of a variety of nitroaromatic compounds using NADPH as source of reducing equivalents; two electrons are transferred. This is Oxygen-insensitive NADPH nitroreductase (rdxA) from Helicobacter acinonychis (strain Sheeba).